The chain runs to 505 residues: ATP synthase subunit alpha (505 aa).

ATP is bound at residue 171–178; the sequence is GDRQTGKT.

This sequence belongs to the ATPase alpha/beta chains family. As to quaternary structure, F-type ATPases have 2 components, CF(1) - the catalytic core - and CF(0) - the membrane proton channel. CF(1) has five subunits: alpha(3), beta(3), gamma(1), delta(1), epsilon(1). CF(0) has three main subunits: a(1), b(2) and c(9-12). The alpha and beta chains form an alternating ring which encloses part of the gamma chain. CF(1) is attached to CF(0) by a central stalk formed by the gamma and epsilon chains, while a peripheral stalk is formed by the delta and b chains.

It is found in the cell inner membrane. The enzyme catalyses ATP + H2O + 4 H(+)(in) = ADP + phosphate + 5 H(+)(out). Its function is as follows. Produces ATP from ADP in the presence of a proton gradient across the membrane. The alpha chain is a regulatory subunit. The protein is ATP synthase subunit alpha of Aliarcobacter butzleri (strain RM4018) (Arcobacter butzleri).